The chain runs to 502 residues: Dipeptide and tripeptide permease A (502 aa).

The Cytoplasmic portion of the chain corresponds to 1–35; it reads MSTANNKPTDESVSLNAFKQPKAFYLIFSIELWER. A helical transmembrane segment spans residues 36 to 56; it reads FGFYGLQGIMAVYLVKQLGMS. The Periplasmic segment spans residues 57–60; the sequence is EADS. Residues 61–81 traverse the membrane as a helical segment; that stretch reads ITLFSSFSALVYGLVAVGGWL. Topologically, residues 82 to 90 are cytoplasmic; sequence GDKVLGTKR. Residues 91–111 traverse the membrane as a helical segment; sequence VIMLGAVVLAIGYGLVAWSGH. D112 is a topological domain (periplasmic). Residues 113-133 traverse the membrane as a helical segment; the sequence is AAVVYMGMATIAVGNGLFKAN. At 134 to 154 the chain is on the cytoplasmic side; that stretch reads PSSLLSTCYNKDDPRLDGAFT. A helical membrane pass occupies residues 155–175; sequence MYYMSINIGSFFSMLATPWLA. Residues 176–179 lie on the Periplasmic side of the membrane; that stretch reads AKFG. A helical membrane pass occupies residues 180 to 200; that stretch reads WSVAFALSFVGMLITVVNFLF. Residues 201 to 218 are Cytoplasmic-facing; the sequence is CRSWVKNYGSKPDFEPVH. Residues 219 to 239 traverse the membrane as a helical segment; it reads IGKLLATIVGVVILATIATWL. Residues 240–247 are Periplasmic-facing; the sequence is LHNQGVAR. Residues 248–268 form a helical membrane-spanning segment; it reads AVLGVVALGIICIFAKEAFAM. Over 269 to 275 the chain is Cytoplasmic; the sequence is QGAARRK. Residues 276–296 form a helical membrane-spanning segment; sequence MIVAFILMLQAVVFFVLYSQM. Residues 297–321 lie on the Periplasmic side of the membrane; the sequence is PTSLNFFAIRNVEHSILSIAFEPEQ. The helical transmembrane segment at 322-342 threads the bilayer; that stretch reads FQALNPFWIMIGSPILAAIYN. Over 343–353 the chain is Cytoplasmic; sequence KMGDRLPMPHK. Residues 354–374 form a helical membrane-spanning segment; the sequence is FAIGMVLCSGAFLVLPLGTKF. Over 375 to 384 the chain is Periplasmic; the sequence is ATDAGIVSVN. A helical membrane pass occupies residues 385–405; the sequence is WLILSYALQSIGELMISGLGL. The Cytoplasmic segment spans residues 406 to 415; it reads AMVAQLVPQR. The chain crosses the membrane as a helical span at residues 416–436; sequence LMGFIMGSWFLTTAGAALIAG. At 437 to 460 the chain is on the periplasmic side; it reads KIANLMAVPENVTDPLVSLEVYGR. The helical transmembrane segment at 461-481 threads the bilayer; sequence VFMQIGIATAVIAVLMLLTAP. The Cytoplasmic portion of the chain corresponds to 482-502; the sequence is KLNRMTLEDDKAAKATDTATA.

It belongs to the major facilitator superfamily. Proton-dependent oligopeptide transporter (POT/PTR) (TC 2.A.17) family. DtpA subfamily.

It localises to the cell inner membrane. In terms of biological role, proton-dependent permease that transports di- and tripeptides. The sequence is that of Dipeptide and tripeptide permease A from Enterobacter sp. (strain 638).